A 126-amino-acid polypeptide reads, in one-letter code: DNA-directed RNA polymerase subunit omega (126 aa).

This sequence belongs to the RNA polymerase subunit omega family. In terms of assembly, the RNAP catalytic core consists of 2 alpha, 1 beta, 1 beta' and 1 omega subunit. When a sigma factor is associated with the core the holoenzyme is formed, which can initiate transcription.

It carries out the reaction RNA(n) + a ribonucleoside 5'-triphosphate = RNA(n+1) + diphosphate. Functionally, promotes RNA polymerase assembly. Latches the N- and C-terminal regions of the beta' subunit thereby facilitating its interaction with the beta and alpha subunits. The protein is DNA-directed RNA polymerase subunit omega of Rickettsia felis (strain ATCC VR-1525 / URRWXCal2) (Rickettsia azadi).